We begin with the raw amino-acid sequence, 137 residues long: Large-conductance mechanosensitive channel (137 aa).

2 helical membrane-spanning segments follow: residues 9 to 29 (AFAV…GAAF) and 79 to 99 (IQSV…VKAI).

This sequence belongs to the MscL family. Homopentamer.

It is found in the cell inner membrane. Functionally, channel that opens in response to stretch forces in the membrane lipid bilayer. May participate in the regulation of osmotic pressure changes within the cell. The polypeptide is Large-conductance mechanosensitive channel (Pseudomonas fluorescens (strain Pf0-1)).